A 442-amino-acid chain; its full sequence is Elongation factor 1-alpha (442 aa).

The tr-type G domain occupies 5 to 228; that stretch reads KTHINIVVIG…DSVTPPERPV (224 aa). The interval 14–21 is G1; it reads GHVDSGKS. GTP is bound at residue 14–21; the sequence is GHVDSGKS. Residues 70–74 are G2; that stretch reads GITID. The tract at residues 91–94 is G3; it reads DAPG. GTP contacts are provided by residues 91–95 and 153–156; these read DAPGH and NKMD. Positions 153-156 are G4; that stretch reads NKMD. The G5 stretch occupies residues 192-194; it reads SGF.

It belongs to the TRAFAC class translation factor GTPase superfamily. Classic translation factor GTPase family. EF-Tu/EF-1A subfamily.

The protein localises to the cytoplasm. This protein promotes the GTP-dependent binding of aminoacyl-tRNA to the A-site of ribosomes during protein biosynthesis. This Entamoeba histolytica (strain ATCC 30459 / HM-1:IMSS / ABRM) protein is Elongation factor 1-alpha.